We begin with the raw amino-acid sequence, 266 residues long: uncharacterized protein (266 aa).

The first 22 residues, 1 to 22, serve as a signal peptide directing secretion; sequence MGYFKRVVLYIIVMVVSVFIIG. A lipid anchor (N-palmitoyl cysteine) is attached at Cys23. Residue Cys23 is the site of S-diacylglycerol cysteine attachment.

It belongs to the staphylococcal tandem lipoprotein family.

The protein resides in the cell membrane. This is an uncharacterized protein from Staphylococcus aureus (strain N315).